Here is a 525-residue protein sequence, read N- to C-terminus: GMP synthase [glutamine-hydrolyzing] (525 aa).

One can recognise a Glutamine amidotransferase type-1 domain in the interval 9–207 (RILILDFGSQ…ILDICGCEAL (199 aa)). The Nucleophile role is filled by cysteine 86. Catalysis depends on residues histidine 181 and glutamate 183. The region spanning 208–400 (WTPSKIAEDA…LGLPYDMVYR (193 aa)) is the GMPS ATP-PPase domain. 235-241 (SGGVDSS) contacts ATP.

Homodimer.

It carries out the reaction XMP + L-glutamine + ATP + H2O = GMP + L-glutamate + AMP + diphosphate + 2 H(+). Its pathway is purine metabolism; GMP biosynthesis; GMP from XMP (L-Gln route): step 1/1. Functionally, catalyzes the synthesis of GMP from XMP. This chain is GMP synthase [glutamine-hydrolyzing], found in Pseudomonas fluorescens (strain ATCC BAA-477 / NRRL B-23932 / Pf-5).